Reading from the N-terminus, the 293-residue chain is ATP synthase gamma chain (293 aa).

This sequence belongs to the ATPase gamma chain family. In terms of assembly, F-type ATPases have 2 components, CF(1) - the catalytic core - and CF(0) - the membrane proton channel. CF(1) has five subunits: alpha(3), beta(3), gamma(1), delta(1), epsilon(1). CF(0) has three main subunits: a, b and c.

The protein resides in the cell inner membrane. Its function is as follows. Produces ATP from ADP in the presence of a proton gradient across the membrane. The gamma chain is believed to be important in regulating ATPase activity and the flow of protons through the CF(0) complex. The polypeptide is ATP synthase gamma chain (Beijerinckia indica subsp. indica (strain ATCC 9039 / DSM 1715 / NCIMB 8712)).